The primary structure comprises 453 residues: Bestrophin homolog 5 (453 aa).

A run of 4 helical transmembrane segments spans residues 78-98, 113-133, 275-295, and 314-334; these read ELIV…FALT, DARM…NIII, IPLM…FLCI, and LYIP…LKVA.

This sequence belongs to the anion channel-forming bestrophin (TC 1.A.46) family. Calcium-sensitive chloride channel subfamily. Forms oligomers.

It is found in the cell membrane. Forms chloride channels. The protein is Bestrophin homolog 5 (best-5) of Caenorhabditis elegans.